We begin with the raw amino-acid sequence, 262 residues long: ClpXP adapter protein SpxH (262 aa).

It belongs to the SpxH family. Interacts with Spx.

The protein localises to the cytoplasm. Adapter protein required for efficient degradation of Spx by ClpXP under non-stress conditions. Interaction with Spx stabilizes Spx and exposes the C-terminus of Spx for recognition and proteolysis by ClpXP. The chain is ClpXP adapter protein SpxH from Staphylococcus saprophyticus subsp. saprophyticus (strain ATCC 15305 / DSM 20229 / NCIMB 8711 / NCTC 7292 / S-41).